Consider the following 932-residue polypeptide: MGLTPMMRQYLEVKESCKDCILFFRLGDFYEMFFEDAKVASKELELVLTGRDCGLEERAPMCGIPYHAANTYIGRLVSAGYKIAICEQLEDPSASKGIVKRGIIKIITPGTYTDSSFLEENKNNYIMSFYLDDNMCAMSFADISTGEFNSTHSNFKEAVVLDEISKFAPREIVLEENIKESFIHTIKERFPNISISKIKEENFDYNIDNNLKEQFNNFNENEYETIVKKSANGLLYYIFHTQKNILSNINKIDYYSIVDYLTIDVNSRRNLEITENLREKTKKGSLLWVLDKTNTAMGGRQLRRWIEQPLINKNPIENRLNAVEELLNNISLQEDLKEDLKSIYDIERIVGKVASKSVNAKELISLKCSIGKVPYIKKYLSGFKSDLFLNMEQCIDTLEDIHKLLDKALLDNPSLSVKEGNIIKEGFNEEVDSLREAKSNGKKWIASLEQKEKEETGIKSLKVSYNKVFGYFIEITKANLNLVPEGRYIRKQTLSNAERYITPELKEMEEKILGAEEKLIDIEYKLFTEIRDFIEENIDRMQKTARIISDIDCLCSLATVALENNYIKPNINAKDEILIEEGRHPVVEKVIPKGEFISNDSLIDTKENQLILITGPNMAGKSTYMRQVALITIMAQIGSFVPAKKANISICDKIFTRIGASDDLAAGKSTFMVEMWEVSNILKNATSKSLVLLDEVGRGTSTYDGLSIAWSVIEYICNNKNLRCKTLFATHYHELTKLEDNIEGVKNYSVSVSELENEIVFLRKIIRGGADQSYGIEVAKLAGLPSPVINRAKEILQHIEGDKEENSLNIAPSKEYKSKDYIEVSKDTLNTKNNLGSEIKHDTLSETNTATIIEDESTKEHLSSNRKQINCRINDEKSIKKEVAVDSFQINFEYIKRDKIIEEIKNIDILNMTPMEGFNKLYDIINKTKDID.

Position 615 to 622 (615 to 622 (GPNMAGKS)) interacts with ATP.

The protein belongs to the DNA mismatch repair MutS family.

Functionally, this protein is involved in the repair of mismatches in DNA. It is possible that it carries out the mismatch recognition step. This protein has a weak ATPase activity. The polypeptide is DNA mismatch repair protein MutS (Clostridium botulinum (strain Kyoto / Type A2)).